A 2812-amino-acid polypeptide reads, in one-letter code: Zonadhesin (2812 aa).

Positions 1–17 (MVPPVWTLLLLVGAALF) are cleaved as a signal peptide. Over 18-2757 (RKEKPPDQKL…DAPPPRKPAS (2740 aa)) the chain is Extracellular. MAM domains lie at 39–204 (TQCD…SCNR), 209–368 (QTCS…PCGE), and 371–536 (PQCD…TCPV). The segment at 61–84 (EDWVRASGPSPTGSTGAPGGYPNG) is disordered. Residues 66 to 75 (ASGPSPTGST) are compositionally biased toward low complexity. Asn333 and Asn493 each carry an N-linked (GlcNAc...) asparagine glycan. Disordered stretches follow at residues 545-884 (VSPV…PTEK) and 904-929 (EKPTISPEKPTISTEKPTIPTEKPTI). Over residues 547–558 (PVSSTGPSETTG) the composition is skewed to low complexity. The span at 559–570 (LTENPTISTKKP) shows a compositional bias: polar residues. The interval 573 to 1041 (SIEKPSVTTE…GTTTTSRSST (469 aa)) is 66 X heptapeptide repeats (approximate) (mucin-like domain). 5 stretches are compositionally biased toward low complexity: residues 592-603 (TIPTEKPTISTE), 651-675 (TEKPTVPTEEPTTPTEETTTSMEEP), 713-842 (SPEK…STEK), 853-868 (STEKPTIPTEKPTISP), and 916-929 (STEKPTIPTEKPTI). The TIL 1 domain occupies 1044 to 1093 (CPPNARYESCACPASCKSPRPSCGPLCREGCVCNPGFLFSDNHCIQASSC). Residues 1103–1148 (EPGAEWFSPNCTEHCRCWPGSRVECQISQCGTHTVCQLKNGQYGCH) enclose the VWFC 1 domain. Residues Asn1112 and Asn1188 are each glycosylated (N-linked (GlcNAc...) asparagine). The region spanning 1154–1331 (ATCLVYGDPH…TDQDEDQECQ (178 aa)) is the VWFD 1 domain. 2 cysteine pairs are disulfide-bonded: Cys1156–Cys1291 and Cys1178–Cys1330. Residues 1302–1316 (HLKLDGSPAGDKEEL) are compositionally biased toward basic and acidic residues. The disordered stretch occupies residues 1302–1323 (HLKLDGSPAGDKEELGNSWQTD). Positions 1426 to 1479 (CPPNSKYSLCAKPCPDTCHSGFSGMFCSDRCVEACECNPGFVLSGLECIPRSQC) constitute a TIL 2 domain. One can recognise a VWFC 2 domain in the interval 1480–1535 (GCLHPAGSYFKVGERWYKPGCKELCVCESNNRIRCQPWRCRAQEFCGQQDGIYGCH). One can recognise a VWFD 2 domain in the interval 1540–1720 (ATCTASGDPH…LPESSEPGCF (181 aa)). Disulfide bonds link Cys1542–Cys1680 and Cys1564–Cys1719. Residues Asn1685 and Asn1804 are each glycosylated (N-linked (GlcNAc...) asparagine). The region spanning 1812-1867 (CPPGSSYSPCSSPCPDTCSSINNPRDCPKALPCAESCECQKGHILSGTSCVPLGQC) is the TIL 3 domain. In terms of domain architecture, VWFC 3 spans 1868–1924 (GCTDPAGSYHPVGERWYTENTCTRLCTCSVHNNITCFQSTCKPNQICWALDGLLHCR). 2 N-linked (GlcNAc...) asparagine glycosylation sites follow: Asn1900 and Asn1946. The region spanning 1929–2108 (GVCQLPGESH…KDKDIDPSCQ (180 aa)) is the VWFD 3 domain. Disulfide bonds link Cys1931-Cys2069 and Cys1953-Cys2107. The N-linked (GlcNAc...) asparagine glycan is linked to Asn2203. One can recognise a TIL 4 domain in the interval 2211–2267 (CPAYSSYTNCLPSCSPSCWDLDGRCEGAKVPSACAEGCICQPGYVLSEDKCVPRSQC). Residues 2268–2329 (GCKDAHGGSI…NSNCVSDKSE (62 aa)) enclose the VWFC 4 domain. One can recognise a VWFD 4 domain in the interval 2329 to 2505 (EQCSVYGDPR…SWEVKTEDAL (177 aa)). A disulfide bridge connects residues Cys2331 and Cys2468. N-linked (GlcNAc...) asparagine glycans are attached at residues Asn2542 and Asn2701. Residues 2652-2797 (CGCTSNGIYY…KREKTQEGDR (146 aa)) form the VWFC 5 domain. Positions 2708 to 2744 (PESPCLQNPCQNDGQCREQGATFTCECEVGYGGGLCM) constitute an EGF-like domain. 3 disulfide bridges follow: Cys2712/Cys2723, Cys2717/Cys2732, and Cys2734/Cys2743. A helical membrane pass occupies residues 2758-2778 (NLVGVLLGLLVPVVVVLLAVT). At 2779 to 2812 (RECIYRTRRKREKTQEGDRLARLVDTDTVLDCAC) the chain is on the cytoplasmic side.

Probably forms covalent oligomers. In terms of tissue distribution, in testis, primarily in haploid spermatids.

It localises to the cell membrane. Functionally, binds in a species-specific manner to the zona pellucida of the egg. May be involved in gamete recognition and/or signaling. This Homo sapiens (Human) protein is Zonadhesin (ZAN).